Consider the following 186-residue polypeptide: NADH dehydrogenase [ubiquinone] 1 beta subcomplex subunit 8, mitochondrial (186 aa).

A mitochondrion-targeting transit peptide spans 1-28 (MAVARAGVLGVQWLQRASWNVMPLGART). A helical membrane pass occupies residues 133–153 (LFGFLAFMIFMCWVGEVYPVY).

The protein belongs to the complex I NDUFB8 subunit family. In terms of assembly, complex I is composed of 45 different subunits.

The protein resides in the mitochondrion inner membrane. In terms of biological role, accessory subunit of the mitochondrial membrane respiratory chain NADH dehydrogenase (Complex I), that is believed not to be involved in catalysis. Complex I functions in the transfer of electrons from NADH to the respiratory chain. The immediate electron acceptor for the enzyme is believed to be ubiquinone. In Pongo abelii (Sumatran orangutan), this protein is NADH dehydrogenase [ubiquinone] 1 beta subcomplex subunit 8, mitochondrial (NDUFB8).